Consider the following 303-residue polypeptide: 2-phospho-L-lactate transferase (303 aa).

Residues Asp48 and Lys87 each coordinate 7,8-didemethyl-8-hydroxy-5-deazariboflavin.

Belongs to the CofD family. As to quaternary structure, homodimer. Requires Mg(2+) as cofactor.

The enzyme catalyses (2S)-lactyl-2-diphospho-5'-guanosine + 7,8-didemethyl-8-hydroxy-5-deazariboflavin = oxidized coenzyme F420-0 + GMP + H(+). It participates in cofactor biosynthesis; coenzyme F420 biosynthesis. Catalyzes the transfer of the 2-phospholactate moiety from (2S)-lactyl-2-diphospho-5'-guanosine to 7,8-didemethyl-8-hydroxy-5-deazariboflavin (FO) with the formation of oxidized coenzyme F420-0 and GMP. This Methanosarcina mazei (strain ATCC BAA-159 / DSM 3647 / Goe1 / Go1 / JCM 11833 / OCM 88) (Methanosarcina frisia) protein is 2-phospho-L-lactate transferase.